We begin with the raw amino-acid sequence, 69 residues long: Large ribosomal subunit protein bL28 (69 aa).

Residues M1 to R27 form a disordered region.

It belongs to the bacterial ribosomal protein bL28 family.

The chain is Large ribosomal subunit protein bL28 from Sulfurovum sp. (strain NBC37-1).